Consider the following 604-residue polypeptide: Glutamine--fructose-6-phosphate aminotransferase [isomerizing] (604 aa).

C2 serves as the catalytic Nucleophile; for GATase activity. One can recognise a Glutamine amidotransferase type-2 domain in the interval 2-218 (CGIVGVVGNT…DKELVIVKKD (217 aa)). 2 consecutive SIS domains span residues 284–423 (IIKS…ANGK) and 456–594 (VEQL…VDKP). K599 serves as the catalytic For Fru-6P isomerization activity.

Homodimer.

It localises to the cytoplasm. The enzyme catalyses D-fructose 6-phosphate + L-glutamine = D-glucosamine 6-phosphate + L-glutamate. Catalyzes the first step in hexosamine metabolism, converting fructose-6P into glucosamine-6P using glutamine as a nitrogen source. In Streptococcus agalactiae serotype III (strain NEM316), this protein is Glutamine--fructose-6-phosphate aminotransferase [isomerizing].